Reading from the N-terminus, the 296-residue chain is Acetylglutamate kinase (296 aa).

Substrate is bound by residues G67–G68, R89, and N194.

Belongs to the acetylglutamate kinase family. ArgB subfamily.

It is found in the cytoplasm. The enzyme catalyses N-acetyl-L-glutamate + ATP = N-acetyl-L-glutamyl 5-phosphate + ADP. Its pathway is amino-acid biosynthesis; L-arginine biosynthesis; N(2)-acetyl-L-ornithine from L-glutamate: step 2/4. Its function is as follows. Catalyzes the ATP-dependent phosphorylation of N-acetyl-L-glutamate. The protein is Acetylglutamate kinase of Brucella canis (strain ATCC 23365 / NCTC 10854 / RM-666).